The chain runs to 64 residues: Conotoxin VnMLCL-033 (64 aa).

The N-terminal stretch at 1 to 19 (MLCLPVFIILLLLASPAAP) is a signal peptide. Positions 20–43 (NPLQTRIQSNLIRAGPEDANIKTD) are excised as a propeptide. Ile63 carries the isoleucine amide modification.

This sequence belongs to the conotoxin T superfamily. As to expression, expressed by the venom duct.

Its subcellular location is the secreted. The chain is Conotoxin VnMLCL-033 from Conus ventricosus (Mediterranean cone).